The chain runs to 211 residues: DNA-directed RNA polymerases I, II, and III subunit RPABC1 (211 aa).

It belongs to the archaeal Rpo5/eukaryotic RPB5 RNA polymerase subunit family. Component of the RNA polymerase I (Pol I), RNA polymerase II (Pol II) and RNA polymerase III (Pol III) complexes consisting of at least 13, 12 and 17 subunits, respectively. In RNA Pol II, this subunit is present in 2-fold molar excess over the other subunits.

The protein localises to the nucleus. Functionally, DNA-dependent RNA polymerase catalyzes the transcription of DNA into RNA using the four ribonucleoside triphosphates as substrates. Common component of RNA polymerases I, II and III which synthesize ribosomal RNA precursors, mRNA precursors and many functional non-coding RNAs, and small RNAs, such as 5S rRNA and tRNAs, respectively. Pol II is the central component of the basal RNA polymerase II transcription machinery. Pols are composed of mobile elements that move relative to each other. In Pol II, RPB5 is part of the lower jaw surrounding the central large cleft and thought to grab the incoming DNA template. Seems to be the major component in this process. The chain is DNA-directed RNA polymerases I, II, and III subunit RPABC1 from Caenorhabditis briggsae.